We begin with the raw amino-acid sequence, 439 residues long: MTRTGLSDTIAAIATAPGSAGVGIVRISGPDALGIADGAFRGRRRPSATRGGRFLFGQLVAGDGEVLDEGLCLVFRGPHSYTGEDVAELQTHGSPAVLARVLSRVLELGARPARPGEFTLRAYLAGRLDLAQAEAVLELVNAGTETARRQAALGLSGALGERVERIAAHVTRTLAALQAMLDYPEEGVPDEDRTVPLAAAEAELHALVGTARAGQVATRGARLALIGRPNAGKSSLLNALLGYERSIVTPIPGTTRDYLEAQLSLAGVPVTLVDTAGLRETGDEVEAAGVRQAVRLAESADLVLVLEDGSQPRDHLPAELPRETRMLRVRTKADLPAAWTDPGALDVSAVTGQGLSALRDAIHTALIGDAAQGEAWLTTERQADAARRALTHIQAARSLPDDLAGYELEEALRALADLTGRDVQDDVVDAVFRNFCVGK.

(6S)-5-formyl-5,6,7,8-tetrahydrofolate-binding residues include Arg-26, Glu-88, and Arg-127. One can recognise a TrmE-type G domain in the interval 220 to 367 (GARLALIGRP…LRDAIHTALI (148 aa)). Asn-230 is a K(+) binding site. GTP-binding positions include 230–235 (NAGKSS), 249–255 (TPIPGTT), and 274–277 (DTAG). Ser-234 is a Mg(2+) binding site. Residues Thr-249, Ile-251, and Thr-254 each contribute to the K(+) site. Residue Thr-255 coordinates Mg(2+). Lys-439 contacts (6S)-5-formyl-5,6,7,8-tetrahydrofolate.

It belongs to the TRAFAC class TrmE-Era-EngA-EngB-Septin-like GTPase superfamily. TrmE GTPase family. Homodimer. Heterotetramer of two MnmE and two MnmG subunits. Requires K(+) as cofactor.

Its subcellular location is the cytoplasm. Functionally, exhibits a very high intrinsic GTPase hydrolysis rate. Involved in the addition of a carboxymethylaminomethyl (cmnm) group at the wobble position (U34) of certain tRNAs, forming tRNA-cmnm(5)s(2)U34. The chain is tRNA modification GTPase MnmE from Deinococcus geothermalis (strain DSM 11300 / CIP 105573 / AG-3a).